We begin with the raw amino-acid sequence, 421 residues long: CinA-like protein (421 aa).

The protein belongs to the CinA family.

The polypeptide is CinA-like protein (Synechococcus sp. (strain ATCC 27144 / PCC 6301 / SAUG 1402/1) (Anacystis nidulans)).